The following is a 389-amino-acid chain: Glutamate 5-kinase (389 aa).

Lys-26 is a binding site for ATP. Ser-66, Asp-153, and Asn-167 together coordinate substrate. 187-188 lines the ATP pocket; the sequence is TD. The PUA domain maps to 293-371; sequence AGTLFLDQGA…EQIEWILGHR (79 aa).

The protein belongs to the glutamate 5-kinase family.

The protein resides in the cytoplasm. The enzyme catalyses L-glutamate + ATP = L-glutamyl 5-phosphate + ADP. The protein operates within amino-acid biosynthesis; L-proline biosynthesis; L-glutamate 5-semialdehyde from L-glutamate: step 1/2. Catalyzes the transfer of a phosphate group to glutamate to form L-glutamate 5-phosphate. This Rhodopirellula baltica (strain DSM 10527 / NCIMB 13988 / SH1) protein is Glutamate 5-kinase.